The chain runs to 496 residues: DNA-dependent metalloprotease SPRTN (496 aa).

N-acetylmethionine is present on Met-1. The SprT-like domain maps to 45-212 (LQALFLQFND…KTCGGTYIKI (168 aa)). Position 111 (His-111) interacts with Zn(2+). The active site involves Glu-112. Residues His-115 and His-130 each coordinate Zn(2+). Lys-230 bears the N6-acetyllysine mark. An SHP-box motif is present at residues 253–261 (FSGKGYVLG). Ser-268 is modified (phosphoserine). Residue Lys-303 forms a Glycyl lysine isopeptide (Lys-Gly) (interchain with G-Cter in SUMO2) linkage. The PIP-box motif lies at 326-333 (QSVLSSYF). Lys-342 is covalently cross-linked (Glycyl lysine isopeptide (Lys-Gly) (interchain with G-Cter in SUMO2); alternate). A Glycyl lysine isopeptide (Lys-Gly) (interchain with G-Cter in ubiquitin); alternate cross-link involves residue Lys-342. Positions 346-459 (NVNGSPVKSG…STPRSSGGQR (114 aa)) are disordered. Lys-361 is covalently cross-linked (Glycyl lysine isopeptide (Lys-Gly) (interchain with G-Cter in SUMO2)). Over residues 382–403 (SSKVTAPASATVTSAAGTSAAI) the composition is skewed to low complexity. Ser-383 bears the Phosphoserine mark. Positions 412 to 423 (DQFLNKRPRLED) match the Nuclear localization signal motif. 2 stretches are compositionally biased toward polar residues: residues 426–437 (ALNNIKEQTQSG) and 445–457 (RPTAISTPRSSGG). Lys-431 is covalently cross-linked (Glycyl lysine isopeptide (Lys-Gly) (interchain with G-Cter in SUMO2)). Residues 461–488 (LVNCPVCQGVVLESQINEHLDRCLEGSK) form a UBZ4-type zinc finger. Cys-464, Cys-467, His-479, and Cys-483 together coordinate Zn(2+).

Belongs to the Spartan family. In terms of assembly, homodimer. Interacts (VIA PIP-box) with PCNA (when ubiquitinated). Interacts (via its SHP-box) with VCP/p97. Interacts with RAD18. Interacts with KCTD13 and POLD3. Zn(2+) serves as cofactor. Autocatalytically cleaved in response to double-stranded DNA-binding: autocatalytic cleavage takes place in trans and leads to inactivation. Post-translationally, monoubiquitinated; monoubiquitination promotes exclusion from chromatin. Deubiquitinated by VCPIP1: deubiquitination is required for subsequent acetylation and recruitment to chromatin and DNA damage sites. In terms of processing, acetylated following deubiquitination by VCPIP1, leading to recruitment to chromatin and DNA damage sites. Phosphorylation by CHEK1 promotes recruitment to chromatin.

It localises to the nucleus. Its subcellular location is the chromosome. With respect to regulation, DNA-binding activates the protease activity: single-stranded DNA-binding specifically activates ability to cleave covalent DNA-protein cross-links (DPCs). In contrast, double-stranded DNA-binding specifically activates autocatalytic cleavage, and subsequent inactivation. DNA-dependent metalloendopeptidase that mediates the proteolytic cleavage of covalent DNA-protein cross-links (DPCs) during DNA synthesis, thereby playing a key role in maintaining genomic integrity. DPCs are highly toxic DNA lesions that interfere with essential chromatin transactions, such as replication and transcription, and which are induced by reactive agents, such as UV light or formaldehyde. Associates with the DNA replication machinery and specifically removes DPCs during DNA synthesis. Catalyzes proteolytic cleavage of the HMCES DNA-protein cross-link following unfolding by the BRIP1/FANCJ helicase. Acts as a pleiotropic protease for DNA-binding proteins cross-linked with DNA, such as TOP1, TOP2A, histones H3 and H4. Mediates degradation of DPCs that are not ubiquitinated, while it is not able to degrade ubiquitinated DPCs. SPRTN activation requires polymerase collision with DPCs followed by helicase bypass of DPCs. Involved in recruitment of VCP/p97 to sites of DNA damage. Also acts as an activator of CHEK1 during normal DNA replication by mediating proteolytic cleavage of CHEK1, thereby promoting CHEK1 removal from chromatin and subsequent activation. Does not activate CHEK1 in response to DNA damage. May also act as a 'reader' of ubiquitinated PCNA: recruited to sites of UV damage and interacts with ubiquitinated PCNA and RAD18, the E3 ubiquitin ligase that monoubiquitinates PCNA. Facilitates chromatin association of RAD18 and is required for efficient PCNA monoubiquitination, promoting a feed-forward loop to enhance PCNA ubiquitination and translesion DNA synthesis. This is DNA-dependent metalloprotease SPRTN from Rattus norvegicus (Rat).